Reading from the N-terminus, the 337-residue chain is Eukaryotic translation initiation factor 3 subunit I (337 aa).

WD repeat units lie at residues 8–47 (GHER…RLGT), 50–91 (GHQG…KVWD), 147–186 (CTES…QLEN), 191–230 (EFDH…ILKT), and 288–327 (GHFG…FDFM).

This sequence belongs to the eIF-3 subunit I family. Component of the eukaryotic translation initiation factor 3 (eIF-3) complex.

The protein localises to the cytoplasm. In terms of biological role, component of the eukaryotic translation initiation factor 3 (eIF-3) complex, which is involved in protein synthesis of a specialized repertoire of mRNAs and, together with other initiation factors, stimulates binding of mRNA and methionyl-tRNAi to the 40S ribosome. The eIF-3 complex specifically targets and initiates translation of a subset of mRNAs involved in cell proliferation. In Aspergillus niger (strain ATCC MYA-4892 / CBS 513.88 / FGSC A1513), this protein is Eukaryotic translation initiation factor 3 subunit I (tif34).